Reading from the N-terminus, the 178-residue chain is ATP-dependent protease subunit HslV (178 aa).

The active site involves threonine 7. Positions 162, 165, and 168 each coordinate Na(+).

This sequence belongs to the peptidase T1B family. HslV subfamily. In terms of assembly, a double ring-shaped homohexamer of HslV is capped on each side by a ring-shaped HslU homohexamer. The assembly of the HslU/HslV complex is dependent on binding of ATP.

The protein localises to the cytoplasm. The catalysed reaction is ATP-dependent cleavage of peptide bonds with broad specificity.. Its activity is regulated as follows. Allosterically activated by HslU binding. Its function is as follows. Protease subunit of a proteasome-like degradation complex believed to be a general protein degrading machinery. This Burkholderia multivorans (strain ATCC 17616 / 249) protein is ATP-dependent protease subunit HslV.